Reading from the N-terminus, the 609-residue chain is Protein kinase PVPK-1 (609 aa).

The segment covering 1-19 (MESSVNGVDSLSEVQNSVS) has biased composition (polar residues). Disordered stretches follow at residues 1–51 (MESS…GHQT) and 80–100 (PTKL…EPNG). The Protein kinase domain occupies 229–565 (FRLLKKLGCG…ATEIKQHPFF (337 aa)). ATP is bound by residues 235-243 (LGCGDIGSV) and lysine 258. The active-site Proton acceptor is the aspartate 354. A disordered region spans residues 429-448 (GKSKKDKKSKPKNDMHNQVT).

It belongs to the protein kinase superfamily. Ser/Thr protein kinase family.

It carries out the reaction L-seryl-[protein] + ATP = O-phospho-L-seryl-[protein] + ADP + H(+). The catalysed reaction is L-threonyl-[protein] + ATP = O-phospho-L-threonyl-[protein] + ADP + H(+). This Phaseolus vulgaris (Kidney bean) protein is Protein kinase PVPK-1.